The primary structure comprises 497 residues: Proline--tRNA ligase (497 aa).

This sequence belongs to the class-II aminoacyl-tRNA synthetase family. ProS type 3 subfamily. Homodimer.

It localises to the cytoplasm. It carries out the reaction tRNA(Pro) + L-proline + ATP = L-prolyl-tRNA(Pro) + AMP + diphosphate. In terms of biological role, catalyzes the attachment of proline to tRNA(Pro) in a two-step reaction: proline is first activated by ATP to form Pro-AMP and then transferred to the acceptor end of tRNA(Pro). The sequence is that of Proline--tRNA ligase from Bacteroides fragilis (strain ATCC 25285 / DSM 2151 / CCUG 4856 / JCM 11019 / LMG 10263 / NCTC 9343 / Onslow / VPI 2553 / EN-2).